An 868-amino-acid polypeptide reads, in one-letter code: Leucine-rich repeat receptor-like serine/threonine-protein kinase At2g14510 (868 aa).

Residues 1-23 (METRNKFMLLACATFSIMSLVKS) form the signal peptide. Topologically, residues 24–510 (QNQQGFISLD…KHQPKSWLVA (487 aa)) are extracellular. N-linked (GlcNAc...) asparagine glycosylation is found at N48, N68, N231, N235, N258, N291, N433, and N446. LRR repeat units follow at residues 412-435 (RIISLDLSLSGLTGVISPSIQNLT), 436-458 (MLRELDLSNNNLTGEVPEFLATI), and 460-482 (PLLVIHLRGNNLRGSVPQALQDR). N495 carries N-linked (GlcNAc...) asparagine glycosylation. A helical membrane pass occupies residues 511 to 531 (IVASISCVAVTIIVLVLIFIF). At 532–868 (RRRKSSTRKV…TFISDIPSAR (337 aa)) the chain is on the cytoplasmic side. The Protein kinase domain occupies 563–832 (NNFEVVLGKG…NMTRVAHELN (270 aa)). Residues 569–577 (LGKGGFGVV) and K590 contribute to the ATP site. A Phosphotyrosine modification is found at Y635. The active-site Proton acceptor is D687. S721 is modified (phosphoserine). T722 and T727 each carry phosphothreonine. Phosphotyrosine is present on Y735.

The protein belongs to the protein kinase superfamily. Ser/Thr protein kinase family.

Its subcellular location is the cell membrane. It catalyses the reaction L-seryl-[protein] + ATP = O-phospho-L-seryl-[protein] + ADP + H(+). The catalysed reaction is L-threonyl-[protein] + ATP = O-phospho-L-threonyl-[protein] + ADP + H(+). The protein is Leucine-rich repeat receptor-like serine/threonine-protein kinase At2g14510 of Arabidopsis thaliana (Mouse-ear cress).